A 330-amino-acid polypeptide reads, in one-letter code: Elongation factor Ts, mitochondrial (330 aa).

The transit peptide at 1 to 16 (MYRNCRKAFTFSLRHY) directs the protein to the mitochondrion.

Belongs to the EF-Ts family.

Its subcellular location is the mitochondrion. In terms of biological role, associates with the EF-Tu.GDP complex and induces the exchange of GDP to GTP. It remains bound to the aminoacyl-tRNA.EF-Tu.GTP complex up to the GTP hydrolysis stage on the ribosome. The chain is Elongation factor Ts, mitochondrial from Laccaria bicolor (strain S238N-H82 / ATCC MYA-4686) (Bicoloured deceiver).